Here is a 97-residue protein sequence, read N- to C-terminus: Large ribosomal subunit protein bL27 (97 aa).

Positions 1–12 (MLKMTLNNLQLF) are excised as a propeptide. The interval 13–37 (AHKKGGGSTSNGRDSQAKRLGAKAA) is disordered.

The protein belongs to the bacterial ribosomal protein bL27 family. The N-terminus is cleaved by ribosomal processing cysteine protease Prp.

The chain is Large ribosomal subunit protein bL27 from Streptococcus pneumoniae serotype 2 (strain D39 / NCTC 7466).